The chain runs to 523 residues: Bifunctional purine biosynthesis protein PurH (523 aa).

Residues 1–152 form the MGS-like domain; it reads MSTDDGRRPI…KNHPSAAVVT (152 aa).

The protein belongs to the PurH family.

It carries out the reaction (6R)-10-formyltetrahydrofolate + 5-amino-1-(5-phospho-beta-D-ribosyl)imidazole-4-carboxamide = 5-formamido-1-(5-phospho-D-ribosyl)imidazole-4-carboxamide + (6S)-5,6,7,8-tetrahydrofolate. It catalyses the reaction IMP + H2O = 5-formamido-1-(5-phospho-D-ribosyl)imidazole-4-carboxamide. It functions in the pathway purine metabolism; IMP biosynthesis via de novo pathway; 5-formamido-1-(5-phospho-D-ribosyl)imidazole-4-carboxamide from 5-amino-1-(5-phospho-D-ribosyl)imidazole-4-carboxamide (10-formyl THF route): step 1/1. It participates in purine metabolism; IMP biosynthesis via de novo pathway; IMP from 5-formamido-1-(5-phospho-D-ribosyl)imidazole-4-carboxamide: step 1/1. This is Bifunctional purine biosynthesis protein PurH from Mycobacterium bovis (strain BCG / Pasteur 1173P2).